The chain runs to 186 residues: MTLRASLRAAVVLFGGCLLVLGLLYPLAMTGIAGVVFPVQAHGSLMYDVNGSVSGSELIARPVTDPRYFQPRPSAVSYNASASGGSNLGPTNPVFLDQVNTSIASLRDAGVTGPIPAELVMASASGLDPDLSVEAALVQAPAVAAARNSSVDEIRALVIAHRVTDLMPFHPEYVNVNTLNQALDGR.

Residues 9–29 (AAVVLFGGCLLVLGLLYPLAM) form a helical membrane-spanning segment.

The protein belongs to the KdpC family. In terms of assembly, the system is composed of three essential subunits: KdpA, KdpB and KdpC.

The protein localises to the cell membrane. In terms of biological role, part of the high-affinity ATP-driven potassium transport (or Kdp) system, which catalyzes the hydrolysis of ATP coupled with the electrogenic transport of potassium into the cytoplasm. This subunit acts as a catalytic chaperone that increases the ATP-binding affinity of the ATP-hydrolyzing subunit KdpB by the formation of a transient KdpB/KdpC/ATP ternary complex. This chain is Potassium-transporting ATPase KdpC subunit, found in Methanosphaerula palustris (strain ATCC BAA-1556 / DSM 19958 / E1-9c).